We begin with the raw amino-acid sequence, 1153 residues long: Reverse gyrase 2 (1153 aa).

The RG N-terminal-type zinc finger occupies 1-41; the sequence is MLKVNYLFGCPNCNGSISVDRLHAGIPCETCLPGAVEKLDI. Residues Cys-10, Cys-13, Cys-28, and Cys-31 each coordinate Zn(2+). ATP is bound by residues Gln-86 and 103–110; that span reads APTGVGKT. The region spanning 90–276 is the Helicase ATP-binding domain; the sequence is LNKLVRGESF…ALRFLVGFEP (187 aa). A DEAD box motif is present at residues 184–187; that stretch reads DDAD. Residues 567–1153 are topoisomerase I; the sequence is MNFKTALLVV…VNPLQSEQYV (587 aa). Positions 571–735 constitute a Toprim domain; the sequence is TALLVVESPT…NIFRISYNEI (165 aa). Position 577 (Glu-577) interacts with Mg(2+). The segment at 654–681 adopts an RG C-terminal-type zinc-finger fold; that stretch reads LYRCMSCGKTITKKVSTCPYCGSSMINS. Zn(2+) is bound by residues Cys-657, Cys-660, Cys-671, and Cys-674. Asp-704 is a binding site for Mg(2+). Residues 751–1142 form the Topo IA-type catalytic domain; sequence NESLVKAQIA…DLLNEIKNIK (392 aa). Tyr-894 (O-(5'-phospho-DNA)-tyrosine intermediate) is an active-site residue.

This sequence in the N-terminal section; belongs to the DEAD box helicase family. DDVD subfamily. In the C-terminal section; belongs to the type IA topoisomerase family. Monomer. Requires Zn(2+) as cofactor. Mg(2+) serves as cofactor.

It is found in the cytoplasm. It carries out the reaction ATP + H2O = ADP + phosphate + H(+). Functionally, modifies the topological state of DNA by introducing positive supercoils in an ATP-dependent process, increasing the linking number in steps of +1. Binds to single-stranded DNA, transiently cleaves and then rejoins the ends, introducing a positive supercoil in the process. The scissile phosphodiester is attacked by the catalytic tyrosine of the enzyme, resulting in the formation of a DNA-(5'-phosphotyrosyl)-enzyme intermediate. Probably involved in rewinding DNA strands in regions of the chromosome that have opened up to allow replication, transcription, DNA repair and/or for DNA protection. Might be a cell cycle protein. The chain is Reverse gyrase 2 from Sulfolobus acidocaldarius (strain ATCC 33909 / DSM 639 / JCM 8929 / NBRC 15157 / NCIMB 11770).